The primary structure comprises 198 residues: dCTP deaminase (198 aa).

Residues 99-104, 125-127, and Q144 contribute to the dCTP site; these read RSSLGR and TLE. Residue E127 is the Proton donor/acceptor of the active site.

Belongs to the dCTP deaminase family. As to quaternary structure, homotrimer.

It carries out the reaction dCTP + H2O + H(+) = dUTP + NH4(+). It functions in the pathway pyrimidine metabolism; dUMP biosynthesis; dUMP from dCTP (dUTP route): step 1/2. In terms of biological role, catalyzes the deamination of dCTP to dUTP. This chain is dCTP deaminase, found in Rhodopirellula baltica (strain DSM 10527 / NCIMB 13988 / SH1).